The chain runs to 516 residues: 2-isopropylmalate synthase (516 aa).

The 262-residue stretch at 10 to 271 (IRIFDTTLRD…TTGIDTRELA (262 aa)) folds into the Pyruvate carboxyltransferase domain. Mn(2+) contacts are provided by D19, H205, H207, and N241. The regulatory domain stretch occupies residues 396-516 (ELVSFRVEAG…REKASNRETP (121 aa)).

It belongs to the alpha-IPM synthase/homocitrate synthase family. LeuA type 1 subfamily. Homodimer. It depends on Mn(2+) as a cofactor.

It is found in the cytoplasm. The catalysed reaction is 3-methyl-2-oxobutanoate + acetyl-CoA + H2O = (2S)-2-isopropylmalate + CoA + H(+). The protein operates within amino-acid biosynthesis; L-leucine biosynthesis; L-leucine from 3-methyl-2-oxobutanoate: step 1/4. Its function is as follows. Catalyzes the condensation of the acetyl group of acetyl-CoA with 3-methyl-2-oxobutanoate (2-ketoisovalerate) to form 3-carboxy-3-hydroxy-4-methylpentanoate (2-isopropylmalate). The protein is 2-isopropylmalate synthase of Acidimicrobium ferrooxidans (strain DSM 10331 / JCM 15462 / NBRC 103882 / ICP).